A 563-amino-acid chain; its full sequence is Arginine--tRNA ligase (563 aa).

The 'HIGH' region signature appears at 120 to 130 (PNIAKPFHIGH).

This sequence belongs to the class-I aminoacyl-tRNA synthetase family. Monomer.

The protein resides in the cytoplasm. It carries out the reaction tRNA(Arg) + L-arginine + ATP = L-arginyl-tRNA(Arg) + AMP + diphosphate. The chain is Arginine--tRNA ligase from Clostridium botulinum (strain ATCC 19397 / Type A).